A 210-amino-acid polypeptide reads, in one-letter code: Ribosomal RNA small subunit methyltransferase G (210 aa).

S-adenosyl-L-methionine contacts are provided by residues Gly-76, Leu-81, 127–128, and Arg-142; that span reads VE.

It belongs to the methyltransferase superfamily. RNA methyltransferase RsmG family.

Its subcellular location is the cytoplasm. The catalysed reaction is guanosine(527) in 16S rRNA + S-adenosyl-L-methionine = N(7)-methylguanosine(527) in 16S rRNA + S-adenosyl-L-homocysteine. Functionally, specifically methylates the N7 position of guanine in position 527 of 16S rRNA. The protein is Ribosomal RNA small subunit methyltransferase G of Vibrio atlanticus (strain LGP32) (Vibrio splendidus (strain Mel32)).